Consider the following 225-residue polypeptide: Transcriptional regulatory protein AfsQ1 (225 aa).

The Response regulatory domain maps to serine 3–leucine 116. Aspartate 52 carries the post-translational modification 4-aspartylphosphate. Positions threonine 124–proline 223 form a DNA-binding region, ompR/PhoB-type.

Phosphorylated by AfsQ2.

The protein localises to the cytoplasm. Its subcellular location is the nucleoid. Its function is as follows. Forms part of a two-component regulatory system AfsQ1/AfsQ2 involved in secondary metabolism. This chain is Transcriptional regulatory protein AfsQ1, found in Streptomyces coelicolor (strain ATCC BAA-471 / A3(2) / M145).